The sequence spans 87 residues: Small ribosomal subunit protein bS20 (87 aa).

The interval 1 to 22 is disordered; it reads MANIKSQIKRNKTNEKARLRNQ.

Belongs to the bacterial ribosomal protein bS20 family.

Functionally, binds directly to 16S ribosomal RNA. The polypeptide is Small ribosomal subunit protein bS20 (Corynebacterium glutamicum (strain R)).